Reading from the N-terminus, the 88-residue chain is Small ribosomal subunit protein bS20 (88 aa).

The protein belongs to the bacterial ribosomal protein bS20 family.

Functionally, binds directly to 16S ribosomal RNA. The protein is Small ribosomal subunit protein bS20 of Aromatoleum aromaticum (strain DSM 19018 / LMG 30748 / EbN1) (Azoarcus sp. (strain EbN1)).